We begin with the raw amino-acid sequence, 470 residues long: Argininosuccinate lyase (470 aa).

Belongs to the lyase 1 family. Argininosuccinate lyase subfamily.

Its subcellular location is the cytoplasm. The enzyme catalyses 2-(N(omega)-L-arginino)succinate = fumarate + L-arginine. The protein operates within amino-acid biosynthesis; L-arginine biosynthesis; L-arginine from L-ornithine and carbamoyl phosphate: step 3/3. The protein is Argininosuccinate lyase of Mycobacterium sp. (strain JLS).